A 431-amino-acid polypeptide reads, in one-letter code: Glutamate-1-semialdehyde 2,1-aminomutase 1 (431 aa).

The residue at position 268 (K268) is an N6-(pyridoxal phosphate)lysine.

This sequence belongs to the class-III pyridoxal-phosphate-dependent aminotransferase family. HemL subfamily. Homodimer. Requires pyridoxal 5'-phosphate as cofactor.

It localises to the cytoplasm. The catalysed reaction is (S)-4-amino-5-oxopentanoate = 5-aminolevulinate. It participates in porphyrin-containing compound metabolism; protoporphyrin-IX biosynthesis; 5-aminolevulinate from L-glutamyl-tRNA(Glu): step 2/2. This is Glutamate-1-semialdehyde 2,1-aminomutase 1 from Anoxybacillus flavithermus (strain DSM 21510 / WK1).